Consider the following 577-residue polypeptide: 2-succinyl-5-enolpyruvyl-6-hydroxy-3-cyclohexene-1-carboxylate synthase (577 aa).

The protein belongs to the TPP enzyme family. MenD subfamily. As to quaternary structure, homodimer. The cofactor is Mg(2+). Mn(2+) is required as a cofactor. Thiamine diphosphate serves as cofactor.

It carries out the reaction isochorismate + 2-oxoglutarate + H(+) = 5-enolpyruvoyl-6-hydroxy-2-succinyl-cyclohex-3-ene-1-carboxylate + CO2. It participates in quinol/quinone metabolism; 1,4-dihydroxy-2-naphthoate biosynthesis; 1,4-dihydroxy-2-naphthoate from chorismate: step 2/7. It functions in the pathway quinol/quinone metabolism; menaquinone biosynthesis. Its function is as follows. Catalyzes the thiamine diphosphate-dependent decarboxylation of 2-oxoglutarate and the subsequent addition of the resulting succinic semialdehyde-thiamine pyrophosphate anion to isochorismate to yield 2-succinyl-5-enolpyruvyl-6-hydroxy-3-cyclohexene-1-carboxylate (SEPHCHC). This Enterococcus faecalis (strain ATCC 700802 / V583) protein is 2-succinyl-5-enolpyruvyl-6-hydroxy-3-cyclohexene-1-carboxylate synthase.